The following is a 554-amino-acid chain: Urocanate hydratase (554 aa).

NAD(+) is bound by residues 51 to 52 (GG), glutamine 129, 175 to 177 (GMG), glutamate 195, arginine 200, 241 to 242 (NA), 262 to 266 (QTSAH), 272 to 273 (YL), and tyrosine 321. Residue cysteine 409 is part of the active site. NAD(+) is bound at residue glycine 491.

The protein belongs to the urocanase family. NAD(+) serves as cofactor.

Its subcellular location is the cytoplasm. It carries out the reaction 4-imidazolone-5-propanoate = trans-urocanate + H2O. It participates in amino-acid degradation; L-histidine degradation into L-glutamate; N-formimidoyl-L-glutamate from L-histidine: step 2/3. Functionally, catalyzes the conversion of urocanate to 4-imidazolone-5-propionate. The polypeptide is Urocanate hydratase (Caulobacter sp. (strain K31)).